A 613-amino-acid polypeptide reads, in one-letter code: SNW/SKI-interacting protein (613 aa).

Residues 135–170 (EGDLGTVVDEEEELQKEIQETAEETKAAIEKIVNVR) adopt a coiled-coil conformation. Residues 186-350 (SQYIKYKPSQ…KARSERTGAA (165 aa)) are SNW. Disordered stretches follow at residues 219–252 (LDPPKFKHKRVPRASGSPPVPVMHSPPRPVTVKD), 315–437 (MRSK…RDRD), and 513–613 (DEQL…SDRR). 2 positions are modified to phosphoserine: S235 and S243. Positions 236–247 (PPVPVMHSPPRP) are enriched in pro residues. Basic and acidic residues-rich tracts occupy residues 315–335 (MRSKVQKEMVMKDKERKEQEL), 358–437 (DRGR…RDRD), 515–529 (QLDKIKNTERFKPDK), 538–548 (VGSKRDRPVEF), and 562–574 (WVSDLKKGKKPLD). Coiled coils occupy residues 318 to 349 (KVQKEMVMKDKERKEQELRALAQKARSERTGA) and 391 to 421 (REEREKRIQREKIREERRRERERERRLDAKD). The span at 577-590 (GSGGTMRASGGGGS) shows a compositional bias: gly residues. Residues 592 to 613 (SRDDDHGGSGRTKINFERSDRR) show a composition bias toward basic and acidic residues.

This sequence belongs to the SNW family. Component of the spliceosome. Interacts with SR45. As to expression, expressed in roots, stems, seedlings, siliques, cotyledons, leaves, inflorescences, seeds and shoot apical meristem.

The protein resides in the nucleus speckle. Functionally, splicing factor involved in post-transcriptional regulation of circadian clock and flowering time genes. Associates with the pre-mRNA of PRR7, PRR9, ELF3 and GI, and is necessary for the regulation of their alternative splicing and mRNA maturation. Probably involved in splice site recognition. The chain is SNW/SKI-interacting protein (SKIP) from Arabidopsis thaliana (Mouse-ear cress).